The primary structure comprises 639 residues: Threonine--tRNA ligase (639 aa).

Residues 1 to 61 (MATVRLPDGK…DGGGELEFVT (61 aa)) enclose the TGS domain. Residues 239-536 (DHRRLGRELG…LIEHYAGAFP (298 aa)) are catalytic. Positions 333, 384, and 513 each coordinate Zn(2+).

This sequence belongs to the class-II aminoacyl-tRNA synthetase family. Homodimer. The cofactor is Zn(2+).

Its subcellular location is the cytoplasm. It catalyses the reaction tRNA(Thr) + L-threonine + ATP = L-threonyl-tRNA(Thr) + AMP + diphosphate + H(+). Catalyzes the attachment of threonine to tRNA(Thr) in a two-step reaction: L-threonine is first activated by ATP to form Thr-AMP and then transferred to the acceptor end of tRNA(Thr). Also edits incorrectly charged L-seryl-tRNA(Thr). The sequence is that of Threonine--tRNA ligase from Rubrobacter xylanophilus (strain DSM 9941 / JCM 11954 / NBRC 16129 / PRD-1).